The chain runs to 350 residues: MTAPSASRLSLGIVALGAYTPERIVRNEDFEARMDTNAAWIESRTGIRERRFAAEHEYTSDMGVRAVQDMLRRDPQALTDVDAIICATVSPDALMPSTAALIGMQVGLVGAAAFDLSTACSGFVYGLSVASGLIHAGTARRVLVVGAEVLSKIVDQDDRGTAILFGDGAGAAVVGPVPEGYGFQDFVLGADGNGGSSLYMRSVAKQLPGGFAMGDFTGMNGREVFKFAVRVLGDSGTQALEKSGLTTADVDWVIPHQANVRIIEAAMERFGLPMSKTIINLDRYGNTSSATVPLVLREGLDDGRIRDGQQLLLIAFGGGLSWVAGTMKWWGGAPSLQPDRAAEHSAGVQG.

Residues Cys-120 and His-256 contribute to the active site. An ACP-binding region spans residues 257-261 (QANVR). Residue Asn-286 is part of the active site.

This sequence belongs to the thiolase-like superfamily. FabH family. In terms of assembly, homodimer.

The protein localises to the cytoplasm. The enzyme catalyses malonyl-[ACP] + acetyl-CoA + H(+) = 3-oxobutanoyl-[ACP] + CO2 + CoA. It participates in lipid metabolism; fatty acid biosynthesis. Its function is as follows. Catalyzes the condensation reaction of fatty acid synthesis by the addition to an acyl acceptor of two carbons from malonyl-ACP. Catalyzes the first condensation reaction which initiates fatty acid synthesis and may therefore play a role in governing the total rate of fatty acid production. Possesses both acetoacetyl-ACP synthase and acetyl transacylase activities. Its substrate specificity determines the biosynthesis of branched-chain and/or straight-chain of fatty acids. This Deinococcus deserti (strain DSM 17065 / CIP 109153 / LMG 22923 / VCD115) protein is Beta-ketoacyl-[acyl-carrier-protein] synthase III.